The sequence spans 296 residues: tRNA dimethylallyltransferase (296 aa).

An ATP-binding site is contributed by 2–9 (GPTASGKT). 4-9 (TASGKT) contributes to the substrate binding site. Interaction with substrate tRNA stretches follow at residues 27-30 (DSAL), 151-155 (QRLSR), and 232-237 (RCVGYR).

It belongs to the IPP transferase family. In terms of assembly, monomer. Mg(2+) is required as a cofactor.

It catalyses the reaction adenosine(37) in tRNA + dimethylallyl diphosphate = N(6)-dimethylallyladenosine(37) in tRNA + diphosphate. In terms of biological role, catalyzes the transfer of a dimethylallyl group onto the adenine at position 37 in tRNAs that read codons beginning with uridine, leading to the formation of N6-(dimethylallyl)adenosine (i(6)A). The chain is tRNA dimethylallyltransferase from Shewanella sp. (strain MR-7).